The chain runs to 59 residues: Beta-defensin 134 (59 aa).

A signal peptide spans 1 to 19; the sequence is MKPLLVVFVFLFLWDPVLA. Intrachain disulfides connect cysteine 25/cysteine 51, cysteine 31/cysteine 45, and cysteine 35/cysteine 52.

It belongs to the beta-defensin family.

It is found in the secreted. Its function is as follows. Has antibacterial activity. This is Beta-defensin 134 (DEFB134) from Pan troglodytes (Chimpanzee).